Here is a 288-residue protein sequence, read N- to C-terminus: Sulfur carrier protein FdhD (288 aa).

The active-site Cysteine persulfide intermediate is the Cys-122. 268–273 (FVRGER) is a Mo-bis(molybdopterin guanine dinucleotide) binding site.

Belongs to the FdhD family.

It is found in the cytoplasm. Required for formate dehydrogenase (FDH) activity. Acts as a sulfur carrier protein that transfers sulfur from IscS to the molybdenum cofactor prior to its insertion into FDH. This is Sulfur carrier protein FdhD from Anaeromyxobacter dehalogenans (strain 2CP-C).